A 667-amino-acid chain; its full sequence is Bifunctional polymyxin resistance protein ArnA (667 aa).

The segment at 1–304 (MKAIVFAYHD…EMGIVTDVRL (304 aa)) is formyltransferase ArnAFT. The active-site Proton donor; for formyltransferase activity is the His104. Residues Arg114 and 136–140 (VKKAD) each bind (6R)-10-formyltetrahydrofolate. A dehydrogenase ArnADH region spans residues 314–667 (RRTRVLILGV…TAAPKDELNA (354 aa)). NAD(+) is bound by residues Asp347 and 368–369 (DI). Residues Ala393, Tyr398, and 432–433 (TS) contribute to the UDP-alpha-D-glucuronate site. The active-site Proton acceptor; for decarboxylase activity is Glu434. UDP-alpha-D-glucuronate is bound by residues Arg460, Asn492, 526–535 (KLVDGGAQKR), and Tyr613. The active-site Proton donor; for decarboxylase activity is the Arg619.

This sequence in the N-terminal section; belongs to the Fmt family. UDP-L-Ara4N formyltransferase subfamily. In the C-terminal section; belongs to the NAD(P)-dependent epimerase/dehydratase family. UDP-glucuronic acid decarboxylase subfamily. As to quaternary structure, homohexamer, formed by a dimer of trimers.

It carries out the reaction UDP-alpha-D-glucuronate + NAD(+) = UDP-beta-L-threo-pentopyranos-4-ulose + CO2 + NADH. It catalyses the reaction UDP-4-amino-4-deoxy-beta-L-arabinose + (6R)-10-formyltetrahydrofolate = UDP-4-deoxy-4-formamido-beta-L-arabinose + (6S)-5,6,7,8-tetrahydrofolate + H(+). The protein operates within nucleotide-sugar biosynthesis; UDP-4-deoxy-4-formamido-beta-L-arabinose biosynthesis; UDP-4-deoxy-4-formamido-beta-L-arabinose from UDP-alpha-D-glucuronate: step 1/3. It participates in nucleotide-sugar biosynthesis; UDP-4-deoxy-4-formamido-beta-L-arabinose biosynthesis; UDP-4-deoxy-4-formamido-beta-L-arabinose from UDP-alpha-D-glucuronate: step 3/3. It functions in the pathway bacterial outer membrane biogenesis; lipopolysaccharide biosynthesis. Its function is as follows. Bifunctional enzyme that catalyzes the oxidative decarboxylation of UDP-glucuronic acid (UDP-GlcUA) to UDP-4-keto-arabinose (UDP-Ara4O) and the addition of a formyl group to UDP-4-amino-4-deoxy-L-arabinose (UDP-L-Ara4N) to form UDP-L-4-formamido-arabinose (UDP-L-Ara4FN). The modified arabinose is attached to lipid A and is required for resistance to polymyxin and cationic antimicrobial peptides. The sequence is that of Bifunctional polymyxin resistance protein ArnA from Yersinia pseudotuberculosis serotype IB (strain PB1/+).